The sequence spans 287 residues: NAD kinase (287 aa).

Catalysis depends on Asp-70, which acts as the Proton acceptor. Residues 70–71 (DG), 144–145 (ND), Arg-155, Lys-172, Asp-174, 185–190 (TAYSLS), and Gln-244 contribute to the NAD(+) site.

Belongs to the NAD kinase family. The cofactor is a divalent metal cation.

The protein localises to the cytoplasm. It carries out the reaction NAD(+) + ATP = ADP + NADP(+) + H(+). In terms of biological role, involved in the regulation of the intracellular balance of NAD and NADP, and is a key enzyme in the biosynthesis of NADP. Catalyzes specifically the phosphorylation on 2'-hydroxyl of the adenosine moiety of NAD to yield NADP. This Solibacter usitatus (strain Ellin6076) protein is NAD kinase.